Here is a 70-residue protein sequence, read N- to C-terminus: NAD(P)H-quinone oxidoreductase subunit L (70 aa).

2 consecutive transmembrane segments (helical) span residues 2 to 22 (IVAL…PIAV) and 39 to 59 (LLMY…SPFA).

The protein belongs to the complex I NdhL subunit family. As to quaternary structure, NDH-1 can be composed of about 15 different subunits; different subcomplexes with different compositions have been identified which probably have different functions.

Its subcellular location is the cellular thylakoid membrane. It carries out the reaction a plastoquinone + NADH + (n+1) H(+)(in) = a plastoquinol + NAD(+) + n H(+)(out). The enzyme catalyses a plastoquinone + NADPH + (n+1) H(+)(in) = a plastoquinol + NADP(+) + n H(+)(out). In terms of biological role, NDH-1 shuttles electrons from an unknown electron donor, via FMN and iron-sulfur (Fe-S) centers, to quinones in the respiratory and/or the photosynthetic chain. The immediate electron acceptor for the enzyme in this species is believed to be plastoquinone. Couples the redox reaction to proton translocation, and thus conserves the redox energy in a proton gradient. Cyanobacterial NDH-1 also plays a role in inorganic carbon-concentration. The protein is NAD(P)H-quinone oxidoreductase subunit L of Nostoc punctiforme (strain ATCC 29133 / PCC 73102).